Reading from the N-terminus, the 60-residue chain is Sec-independent protein translocase protein TatA (60 aa).

The helical transmembrane segment at 1 to 21 (MTPAGPAQLLIVALVVIVLFG) threads the bilayer.

Belongs to the TatA/E family. As to quaternary structure, the Tat system comprises two distinct complexes: a TatABC complex, containing multiple copies of TatA, TatB and TatC subunits, and a separate TatA complex, containing only TatA subunits. Substrates initially bind to the TatABC complex, which probably triggers association of the separate TatA complex to form the active translocon.

It is found in the cell membrane. Functionally, part of the twin-arginine translocation (Tat) system that transports large folded proteins containing a characteristic twin-arginine motif in their signal peptide across membranes. TatA could form the protein-conducting channel of the Tat system. The chain is Sec-independent protein translocase protein TatA from Corynebacterium glutamicum (strain R).